Here is an 849-residue protein sequence, read N- to C-terminus: Membrane protein-large ribosomal subunit bL9 fusion protein (849 aa).

Positions 1 to 680 (MFSKNKHNTK…TQLEGTNIKT (680 aa)) are unknown. A run of 2 helical transmembrane segments spans residues 11–31 (FIVI…LDFQ) and 64–84 (IIFF…VISF). The region spanning 214–342 (KTLALAMITF…GGDQVVVNIE (129 aa)) is the GGDEF domain. Positions 681 to 849 (VTDTLKHFLK…FLNVTERKSK (169 aa)) are large ribosomal subunit protein bL9.

The protein belongs to the bacterial ribosomal protein bL9 family.

The protein resides in the cell membrane. Binds to the 23S rRNA. This Onion yellows phytoplasma (strain OY-M) protein is Membrane protein-large ribosomal subunit bL9 fusion protein.